The chain runs to 320 residues: SPX domain-containing protein 4 (320 aa).

Residues 1–170 form the SPX domain; the sequence is MKFGKDFRSH…GGLLSLPFTQ (170 aa). Disordered regions lie at residues 209 to 233 and 275 to 320; these read SSSAKLQPQNDDAASHDPASSVDVE and CSGA…PRDE. A compositionally biased stretch (polar residues) spans 278-289; the sequence is AITSESDSYSDS. The span at 290-299 shows a compositional bias: acidic residues; it reads QIEDAEDDDK. Positions 304–313 are enriched in polar residues; that stretch reads REQNTAQNAA.

In terms of assembly, homodimer. Interacts (via N-terminus) with PHR2 (via C-terminus) in the presence of inositol polyphosphate. Interacts with BHLH6. Degraded under Pi starvation conditions through the ubiquitin/26S proteasome pathway. Widely expressed. Detected in root cells, with the exception of epidermis, and in mesophyll and vascular bundles in leaves.

The protein localises to the membrane. It localises to the nucleus. It is found in the cytoplasm. Its function is as follows. Inositol polyphosphate sensor that associates with transcription factors to regulate Pi starvation responses. The SPX domain provides a basic binding surface for inositol polyphosphate signaling molecules. Interacts with PHR2 to inhibit its translocation to the nucleus and repress its DNA-binding activity, and then negatively regulate Pi signaling. This is SPX domain-containing protein 4 from Oryza sativa subsp. japonica (Rice).